The sequence spans 435 residues: NADH-quinone oxidoreductase subunit D (435 aa).

The protein belongs to the complex I 49 kDa subunit family. In terms of assembly, NDH-1 is composed of 14 different subunits. Subunits NuoB, C, D, E, F, and G constitute the peripheral sector of the complex.

It localises to the cell inner membrane. It carries out the reaction a quinone + NADH + 5 H(+)(in) = a quinol + NAD(+) + 4 H(+)(out). In terms of biological role, NDH-1 shuttles electrons from NADH, via FMN and iron-sulfur (Fe-S) centers, to quinones in the respiratory chain. The immediate electron acceptor for the enzyme in this species is believed to be ubiquinone. Couples the redox reaction to proton translocation (for every two electrons transferred, four hydrogen ions are translocated across the cytoplasmic membrane), and thus conserves the redox energy in a proton gradient. In Xanthomonas axonopodis pv. citri (strain 306), this protein is NADH-quinone oxidoreductase subunit D.